The primary structure comprises 269 residues: MNMKEISKVVDLVRESNPLVHNITNVVVTNFTANGLLALGASPVMAYAKEEVAEMASIAGALVLNMGTLRPEEVEAMLLAGKSANVNNVPVLFDPVGAGATSYRTEVARHIPAEIELASIRGNAAEIANVINERWEIKGVDAGTGNGNVVSIARQAADELNTVAVITGKEDVVTDGERTIVIRNGHPILTKVTGTGCLLTSVIGAFVAVEKDYVKAAVAALTFYGVASELAAAKTVEKGPGSFQIEFLNQLANTTSSDIEKYGKIEELE.

M45 contributes to the substrate binding site. The ATP site is built by R121 and T167. G194 is a substrate binding site.

The protein belongs to the Thz kinase family. Mg(2+) is required as a cofactor.

The enzyme catalyses 5-(2-hydroxyethyl)-4-methylthiazole + ATP = 4-methyl-5-(2-phosphooxyethyl)-thiazole + ADP + H(+). It participates in cofactor biosynthesis; thiamine diphosphate biosynthesis; 4-methyl-5-(2-phosphoethyl)-thiazole from 5-(2-hydroxyethyl)-4-methylthiazole: step 1/1. Functionally, catalyzes the phosphorylation of the hydroxyl group of 4-methyl-5-beta-hydroxyethylthiazole (THZ). This is Hydroxyethylthiazole kinase from Bacillus cereus (strain ATCC 14579 / DSM 31 / CCUG 7414 / JCM 2152 / NBRC 15305 / NCIMB 9373 / NCTC 2599 / NRRL B-3711).